Consider the following 206-residue polypeptide: 2,3-bisphosphoglycerate-dependent phosphoglycerate mutase (206 aa).

Residues 9–16, 22–23, R61, 88–91, K99, 115–116, and 159–160 contribute to the substrate site; these read RHGQSEWN, TG, ERDY, RR, and GN. H10 acts as the Tele-phosphohistidine intermediate in catalysis. E88 (proton donor/acceptor) is an active-site residue.

It belongs to the phosphoglycerate mutase family. BPG-dependent PGAM subfamily. Homodimer.

It carries out the reaction (2R)-2-phosphoglycerate = (2R)-3-phosphoglycerate. Its pathway is carbohydrate degradation; glycolysis; pyruvate from D-glyceraldehyde 3-phosphate: step 3/5. Functionally, catalyzes the interconversion of 2-phosphoglycerate and 3-phosphoglycerate. The protein is 2,3-bisphosphoglycerate-dependent phosphoglycerate mutase of Azorhizobium caulinodans (strain ATCC 43989 / DSM 5975 / JCM 20966 / LMG 6465 / NBRC 14845 / NCIMB 13405 / ORS 571).